A 194-amino-acid chain; its full sequence is MSLRILAKRSSSIWMKTRVTPALISPITITTRFNSTTTTAPSHKDDVRPVDPKISKIVQDISQLTLLETSSLINELKTVLNIPEISMPMGGFMAGAAGAGAGNVPSSTGEAGSGAEEEAKPEAKTVFTVKLDSFDTKTKAKVIKEVKGLLGLSLVEAKKFVEAAPKVLKENVAKDDAEKIKKTLEDLGAKVSLE.

The N-terminal 33 residues, methionine 1–phenylalanine 33, are a transit peptide targeting the mitochondrion. N-linked (GlcNAc...) asparagine glycosylation occurs at asparagine 34. The interval alanine 101 to lysine 120 is disordered. Positions proline 105–glycine 114 are enriched in low complexity.

It belongs to the bacterial ribosomal protein bL12 family. Component of the mitochondrial large ribosomal subunit (mt-LSU). Mature yeast 74S mitochondrial ribosomes consist of a small (37S) and a large (54S) subunit. The 37S small subunit contains a 15S ribosomal RNA (15S mt-rRNA) and 34 different proteins. The 54S large subunit contains a 21S rRNA (21S mt-rRNA) and 46 different proteins. N-glycosylated.

It is found in the mitochondrion. In terms of biological role, component of the mitochondrial ribosome (mitoribosome), a dedicated translation machinery responsible for the synthesis of mitochondrial genome-encoded proteins, including at least some of the essential transmembrane subunits of the mitochondrial respiratory chain. The mitoribosomes are attached to the mitochondrial inner membrane and translation products are cotranslationally integrated into the membrane. The protein is Large ribosomal subunit protein bL12m (MNP1) of Saccharomyces cerevisiae (strain ATCC 204508 / S288c) (Baker's yeast).